Reading from the N-terminus, the 431-residue chain is Enolase (431 aa).

Residue Q167 participates in (2R)-2-phosphoglycerate binding. The active-site Proton donor is E209. Mg(2+) is bound by residues D246, E290, and D316. (2R)-2-phosphoglycerate is bound by residues K341, R370, S371, and K392. Residue K341 is the Proton acceptor of the active site.

The protein belongs to the enolase family. In terms of assembly, component of the RNA degradosome, a multiprotein complex involved in RNA processing and mRNA degradation. Requires Mg(2+) as cofactor.

The protein localises to the cytoplasm. Its subcellular location is the secreted. The protein resides in the cell surface. The catalysed reaction is (2R)-2-phosphoglycerate = phosphoenolpyruvate + H2O. Its pathway is carbohydrate degradation; glycolysis; pyruvate from D-glyceraldehyde 3-phosphate: step 4/5. Its function is as follows. Catalyzes the reversible conversion of 2-phosphoglycerate (2-PG) into phosphoenolpyruvate (PEP). It is essential for the degradation of carbohydrates via glycolysis. The polypeptide is Enolase (Shigella flexneri serotype 5b (strain 8401)).